A 447-amino-acid chain; its full sequence is Probable glycine dehydrogenase (decarboxylating) subunit 1 (447 aa).

The protein belongs to the GcvP family. N-terminal subunit subfamily. In terms of assembly, the glycine cleavage system is composed of four proteins: P, T, L and H. In this organism, the P 'protein' is a heterodimer of two subunits.

The enzyme catalyses N(6)-[(R)-lipoyl]-L-lysyl-[glycine-cleavage complex H protein] + glycine + H(+) = N(6)-[(R)-S(8)-aminomethyldihydrolipoyl]-L-lysyl-[glycine-cleavage complex H protein] + CO2. Its function is as follows. The glycine cleavage system catalyzes the degradation of glycine. The P protein binds the alpha-amino group of glycine through its pyridoxal phosphate cofactor; CO(2) is released and the remaining methylamine moiety is then transferred to the lipoamide cofactor of the H protein. The chain is Probable glycine dehydrogenase (decarboxylating) subunit 1 from Bacillus cytotoxicus (strain DSM 22905 / CIP 110041 / 391-98 / NVH 391-98).